Reading from the N-terminus, the 433-residue chain is Enolase (433 aa).

Glutamine 167 contributes to the (2R)-2-phosphoglycerate binding site. Catalysis depends on glutamate 209, which acts as the Proton donor. 3 residues coordinate Mg(2+): aspartate 246, glutamate 291, and aspartate 318. 4 residues coordinate (2R)-2-phosphoglycerate: lysine 343, arginine 372, serine 373, and lysine 394. Lysine 343 (proton acceptor) is an active-site residue.

This sequence belongs to the enolase family. Component of the RNA degradosome, a multiprotein complex involved in RNA processing and mRNA degradation. The cofactor is Mg(2+).

The protein resides in the cytoplasm. Its subcellular location is the secreted. The protein localises to the cell surface. The catalysed reaction is (2R)-2-phosphoglycerate = phosphoenolpyruvate + H2O. It functions in the pathway carbohydrate degradation; glycolysis; pyruvate from D-glyceraldehyde 3-phosphate: step 4/5. Its function is as follows. Catalyzes the reversible conversion of 2-phosphoglycerate (2-PG) into phosphoenolpyruvate (PEP). It is essential for the degradation of carbohydrates via glycolysis. The protein is Enolase of Vibrio cholerae serotype O1 (strain ATCC 39541 / Classical Ogawa 395 / O395).